A 100-amino-acid chain; its full sequence is uncharacterized protein (100 aa).

This is an uncharacterized protein from Archaeoglobus fulgidus (strain ATCC 49558 / DSM 4304 / JCM 9628 / NBRC 100126 / VC-16).